Consider the following 136-residue polypeptide: Large-conductance mechanosensitive channel (136 aa).

Transmembrane regions (helical) follow at residues 9–29 (AFAS…GAAF) and 79–99 (IQTV…LKAI).

This sequence belongs to the MscL family. In terms of assembly, homopentamer.

The protein resides in the cell inner membrane. Its function is as follows. Channel that opens in response to stretch forces in the membrane lipid bilayer. May participate in the regulation of osmotic pressure changes within the cell. This Shewanella putrefaciens (strain CN-32 / ATCC BAA-453) protein is Large-conductance mechanosensitive channel.